The chain runs to 318 residues: Putative fimbrium tip subunit Fim1F (318 aa).

Positions 1–24 (MRFNVVLFMLIVALLGGLSTCSSE) are cleaved as a signal peptide. Residues 25–50 (VPIGFDTDELSFDMSLVLLTGDMQTK) constitute a propeptide that is removed on maturation.

This sequence belongs to the bacteroidetes fimbrillin superfamily. FimA/Mfa1 family. In terms of assembly, may be part of the fimbrial tip.

It is found in the fimbrium. In terms of biological role, putative component of the fimbrium tip. Fimbriae are filamentous appendages on the cell surface that mediate cell adhesion and biofilm formation. In Parabacteroides distasonis (strain ATCC 8503 / DSM 20701 / CIP 104284 / JCM 5825 / NCTC 11152), this protein is Putative fimbrium tip subunit Fim1F.